The sequence spans 558 residues: Protein SET DOMAIN GROUP 41 (558 aa).

One can recognise an SET domain in the interval 115–249 (PSISVAIHHA…SGEEITVSYI (135 aa)).

This sequence belongs to the class V-like SAM-binding methyltransferase superfamily.

The polypeptide is Protein SET DOMAIN GROUP 41 (SDG41) (Arabidopsis thaliana (Mouse-ear cress)).